The following is a 492-amino-acid chain: Histone-lysine N-methyltransferase SUVR4 (492 aa).

The interval 112-138 is disordered; sequence ETRSASSGSSIQVVQKQPQLSNGDRKR. A compositionally biased stretch (polar residues) spans 113-133; the sequence is TRSASSGSSIQVVQKQPQLSN. Zn(2+)-binding residues include Cys196, Cys197, Cys200, Cys204, Cys213, Cys281, Cys285, Cys287, and Cys291. The Pre-SET domain maps to 196-299; the sequence is CCANCKGNCL…QCGNRVVQRG (104 aa). An SET domain is found at 302–435; the sequence is CQLQVYFTQE…AMDELTWDYM (134 aa). S-adenosyl-L-methionine is bound by residues 313–315 and 391–392; these read KGW and NH. Cys394 provides a ligand contact to Zn(2+). Tyr434 serves as a coordination point for S-adenosyl-L-methionine. Positions 446 to 462 constitute a Post-SET domain; that stretch reads KAFRCCCGSESCRDRKI. Residues Cys450, Cys452, and Cys457 each coordinate Zn(2+). Positions 463-492 are disordered; the sequence is KGSQGKSIERRKIVSAKKQQGSKEVSKKRK.

It belongs to the class V-like SAM-binding methyltransferase superfamily. Histone-lysine methyltransferase family. Interacts with ubiquitin.

The protein localises to the nucleus. It is found in the chromosome. The enzyme catalyses N(6)-methyl-L-lysyl(9)-[histone H3] + S-adenosyl-L-methionine = N(6),N(6)-dimethyl-L-lysyl(9)-[histone H3] + S-adenosyl-L-homocysteine + H(+). The catalysed reaction is N(6),N(6)-dimethyl-L-lysyl(9)-[histone H3] + S-adenosyl-L-methionine = N(6),N(6),N(6)-trimethyl-L-lysyl(9)-[histone H3] + S-adenosyl-L-homocysteine + H(+). Histone methyltransferase that converts monomethylated 'Lys-9' of histone H3 (H3K9me1) to dimethylated 'Lys-9' (H3K9me2) in the absence of bound ubiquitin, and to trimethylated 'Lys-9' (H3K9me3) in the presence of bound ubiquitin. Acts in a locus-specific manner and contributes to the transcriptional silencing of pseudogenes and transposons. H3 'Lys-9' methylation represents a specific tag for epigenetic transcriptional repression. The protein is Histone-lysine N-methyltransferase SUVR4 (SUVR4) of Arabidopsis thaliana (Mouse-ear cress).